A 108-amino-acid polypeptide reads, in one-letter code: uncharacterized protein (108 aa).

The N-terminal stretch at 1–20 (MNLKSIIFVLFIAFFAFSLA) is a signal peptide. N-linked (GlcNAc...) asparagine glycosylation occurs at Asn-39.

The protein belongs to the Dictyostelium gerABC family.

The protein resides in the secreted. This is an uncharacterized protein from Dictyostelium discoideum (Social amoeba).